A 328-amino-acid polypeptide reads, in one-letter code: MTNQRTTRDGSHGTESVPTQRSRESTDEDHGCPECNGDLVTDEDRGETTCGECGLVVEEDGIDHGPEWRAFNAQEQDEKSRVGAPTTNMMHDKGLSTNIGWQDKDAYGNTLSGRQRRKMQRLRKWNERFRTRNSKERNLKQALGEIERMASAFGLPDSVRETASVIYRRALGEDLLPGRSIEGVATSALYAAARQANTPRSLDEVASVSRVDRGEIARTYRYVARELSLEVAPTDPASYVPRFCSDLELSGDVERRARDLLAAAADAGITSGKSPVGLAAASVYAAALLTNERVTQNEVSTVANVSEVTIRNRYHEILDAGGEPGVEA.

2 stretches are compositionally biased toward basic and acidic residues: residues 1 to 12 (MTNQRTTRDGSH) and 21 to 32 (RSRESTDEDHGC). The disordered stretch occupies residues 1–47 (MTNQRTTRDGSHGTESVPTQRSRESTDEDHGCPECNGDLVTDEDRGE). The TFIIB-type zinc finger occupies 28–58 (EDHGCPECNGDLVTDEDRGETTCGECGLVVE). Zn(2+) contacts are provided by Cys-32, Cys-35, Cys-50, and Cys-53. 2 repeat units span residues 144 to 227 (GEIE…AREL) and 238 to 319 (SYVP…EILD).

It belongs to the TFIIB family.

In terms of biological role, stabilizes TBP binding to an archaeal box-A promoter. Also responsible for recruiting RNA polymerase II to the pre-initiation complex (DNA-TBP-TFIIB). This chain is Transcription initiation factor IIB 4, found in Halobacterium salinarum (strain ATCC 700922 / JCM 11081 / NRC-1) (Halobacterium halobium).